Here is a 336-residue protein sequence, read N- to C-terminus: Dihydroorotate dehydrogenase (quinone) (336 aa).

FMN contacts are provided by residues 62-66 and threonine 86; that span reads AGLDK. Substrate is bound at residue lysine 66. 111–115 contributes to the substrate binding site; it reads NRMGF. FMN contacts are provided by asparagine 139 and asparagine 172. Residue asparagine 172 participates in substrate binding. Serine 175 acts as the Nucleophile in catalysis. Asparagine 177 lines the substrate pocket. 2 residues coordinate FMN: lysine 217 and threonine 245. 246 to 247 is a substrate binding site; it reads NT. FMN-binding positions include glycine 268, glycine 297, and 318–319; that span reads YS.

Belongs to the dihydroorotate dehydrogenase family. Type 2 subfamily. Monomer. It depends on FMN as a cofactor.

The protein localises to the cell membrane. It catalyses the reaction (S)-dihydroorotate + a quinone = orotate + a quinol. The protein operates within pyrimidine metabolism; UMP biosynthesis via de novo pathway; orotate from (S)-dihydroorotate (quinone route): step 1/1. Functionally, catalyzes the conversion of dihydroorotate to orotate with quinone as electron acceptor. This is Dihydroorotate dehydrogenase (quinone) from Vibrio vulnificus (strain CMCP6).